The chain runs to 300 residues: Large ribosomal subunit protein uL18 (300 aa).

Over residues 246–267 the composition is skewed to basic and acidic residues; sequence NIRSDPKRDRKPKKDVSKEPKR. Residues 246 to 276 form a disordered region; sequence NIRSDPKRDRKPKKDVSKEPKRWNAKKLTNA.

This sequence belongs to the universal ribosomal protein uL18 family. As to quaternary structure, component of the large ribosomal subunit (LSU).

The protein resides in the cytoplasm. It localises to the nucleus. Component of the ribosome, a large ribonucleoprotein complex responsible for the synthesis of proteins in the cell. The small ribosomal subunit (SSU) binds messenger RNAs (mRNAs) and translates the encoded message by selecting cognate aminoacyl-transfer RNA (tRNA) molecules. The large subunit (LSU) contains the ribosomal catalytic site termed the peptidyl transferase center (PTC), which catalyzes the formation of peptide bonds, thereby polymerizing the amino acids delivered by tRNAs into a polypeptide chain. The nascent polypeptides leave the ribosome through a tunnel in the LSU and interact with protein factors that function in enzymatic processing, targeting, and the membrane insertion of nascent chains at the exit of the ribosomal tunnel. In Toxoptera citricida (Brown citrus aphid), this protein is Large ribosomal subunit protein uL18 (RpL5).